We begin with the raw amino-acid sequence, 224 residues long: Holliday junction branch migration complex subunit RuvA (224 aa).

The interval 1–67 (MISWLKGEKV…EDGTSLYGFI (67 aa)) is domain I. The tract at residues 68–146 (EVNQRDLFRE…RFTDNDKTIH (79 aa)) is domain II. The interval 147–157 (ENKNDIEANQF) is flexible linker. Positions 157–224 (FSKYIDEIYL…ILMKLSEKST (68 aa)) are domain III.

The protein belongs to the RuvA family. In terms of assembly, homotetramer. Forms an RuvA(8)-RuvB(12)-Holliday junction (HJ) complex. HJ DNA is sandwiched between 2 RuvA tetramers; dsDNA enters through RuvA and exits via RuvB. An RuvB hexamer assembles on each DNA strand where it exits the tetramer. Each RuvB hexamer is contacted by two RuvA subunits (via domain III) on 2 adjacent RuvB subunits; this complex drives branch migration. In the full resolvosome a probable DNA-RuvA(4)-RuvB(12)-RuvC(2) complex forms which resolves the HJ.

It is found in the cytoplasm. Functionally, the RuvA-RuvB-RuvC complex processes Holliday junction (HJ) DNA during genetic recombination and DNA repair, while the RuvA-RuvB complex plays an important role in the rescue of blocked DNA replication forks via replication fork reversal (RFR). RuvA specifically binds to HJ cruciform DNA, conferring on it an open structure. The RuvB hexamer acts as an ATP-dependent pump, pulling dsDNA into and through the RuvAB complex. HJ branch migration allows RuvC to scan DNA until it finds its consensus sequence, where it cleaves and resolves the cruciform DNA. The chain is Holliday junction branch migration complex subunit RuvA from Prochlorococcus marinus (strain NATL2A).